Reading from the N-terminus, the 354-residue chain is Maleylacetate reductase 1 (354 aa).

The protein belongs to the iron-containing alcohol dehydrogenase family. In terms of assembly, homodimer.

It catalyses the reaction 3-oxoadipate + NAD(+) = maleylacetate + NADH + H(+). The catalysed reaction is 3-oxoadipate + NADP(+) = maleylacetate + NADPH + H(+). Its pathway is aromatic compound metabolism; 3-chlorocatechol degradation. In Cupriavidus pinatubonensis (strain JMP 134 / LMG 1197) (Cupriavidus necator (strain JMP 134)), this protein is Maleylacetate reductase 1 (tfdFI).